The primary structure comprises 362 residues: MPGNSFGQLFKITTFGESHGPSLGAVVDGCPAGLELTEADLQEALDRRKPGQNRYTTARREADQVKILSGVFEGVTTGTSIGLLIENTDQRSQDYSDIKDTFRPGHADYTYQHKYGVRDYRGGGRSSARETAMRVAAGAIADKLLRQQGIQVQAALTQMGDVVASNIDWQQVRENELFCGDANAVEAMQELIRQLKKEGDSIGAKIRVQATGVPPGWGEPVFDRLDADLAKALMSINAVKAVSVGDGFEVVSQRGSEHRDEMTPDGFLSNHAGGVLGGISSGQPIFADIALKPTSSIAISGRTIDRWGNEQAIVTKGRHDPCVGIRAVPIVEAMTSLVLADHWLRQRAHNLTAQTETPDISR.

Arg-48 and Arg-54 together coordinate NADP(+). FMN is bound by residues 125 to 127 (RSS), 237 to 238 (NA), Gly-277, 292 to 296 (KPTSS), and Arg-318.

It belongs to the chorismate synthase family. In terms of assembly, homotetramer. FMNH2 is required as a cofactor.

The catalysed reaction is 5-O-(1-carboxyvinyl)-3-phosphoshikimate = chorismate + phosphate. It functions in the pathway metabolic intermediate biosynthesis; chorismate biosynthesis; chorismate from D-erythrose 4-phosphate and phosphoenolpyruvate: step 7/7. Its function is as follows. Catalyzes the anti-1,4-elimination of the C-3 phosphate and the C-6 proR hydrogen from 5-enolpyruvylshikimate-3-phosphate (EPSP) to yield chorismate, which is the branch point compound that serves as the starting substrate for the three terminal pathways of aromatic amino acid biosynthesis. This reaction introduces a second double bond into the aromatic ring system. The chain is Chorismate synthase from Idiomarina loihiensis (strain ATCC BAA-735 / DSM 15497 / L2-TR).